A 388-amino-acid chain; its full sequence is Na(+)/H(+) antiporter NhaA (388 aa).

Over 1-11 (MKHLHRFFSSD) the chain is Cytoplasmic. The chain crosses the membrane as a helical span at residues 12-31 (ASGGIILIIAAILAMMMANS). Residues 32–58 (GATSGWYHDFLETPVQLRVGSLEINKN) lie on the Periplasmic side of the membrane. Residues 59-80 (MLLWINDALMAVFFLLVGLEVK) form a helical membrane-spanning segment. Residues 81–96 (RELMQGSLASLRQAAF) lie on the Cytoplasmic side of the membrane. A helical transmembrane segment spans residues 97 to 116 (PVIAAIGGMIVPALLYLAFN). Residues 117-122 (YADPIT) are Periplasmic-facing. A helical membrane pass occupies residues 123-130 (REGWAIPA). The Cytoplasmic portion of the chain corresponds to 131–154 (ATDIAFALGVLALLGSRVPLALKI). Residues 155–176 (FLMALAIIDDLGAIIIIALFYT) form a helical membrane-spanning segment. At 177-180 (NDLS) the chain is on the periplasmic side. The chain crosses the membrane as a helical span at residues 181 to 200 (MASLGVAAVAIAVLAVLNLC). Topologically, residues 201-204 (GVRR) are cytoplasmic. The helical transmembrane segment at 205–222 (TGVYILVGVVLWTAVLKS) threads the bilayer. A topological domain (periplasmic) is located at residue Gly-223. Residues 224 to 236 (VHATLAGVIVGFF) traverse the membrane as a helical segment. The Cytoplasmic segment spans residues 237–253 (IPLKEKHGRSTAKRLEH). Residues 254-272 (VLHPWVAYLILPLFAFANA) traverse the membrane as a helical segment. The Periplasmic portion of the chain corresponds to 273 to 286 (GVSLQGVTLDGLTS). The chain crosses the membrane as a helical span at residues 287–310 (ILPLGIIAGLLIGKPLGISLFCWL). Topologically, residues 311-339 (ALRLKLAHLPEGTTYQQIMAVGILCGIGF) are cytoplasmic. A helical membrane pass occupies residues 340 to 350 (TMSIFIASLAF). The Periplasmic segment spans residues 351–357 (GSVDPEL). The chain crosses the membrane as a helical span at residues 358–380 (INWAKLGILVGSISSAVIGYSWL). Over 381–388 (RVRLRPSV) the chain is Cytoplasmic.

This sequence belongs to the NhaA Na(+)/H(+) (TC 2.A.33) antiporter family.

The protein localises to the cell inner membrane. The catalysed reaction is Na(+)(in) + 2 H(+)(out) = Na(+)(out) + 2 H(+)(in). In terms of biological role, na(+)/H(+) antiporter that extrudes sodium in exchange for external protons. In Shigella dysenteriae serotype 1 (strain Sd197), this protein is Na(+)/H(+) antiporter NhaA.